The sequence spans 854 residues: Protein translocase subunit SecA (854 aa).

ATP is bound by residues Q89, 107-111 (GEGKT), and D501.

Belongs to the SecA family. In terms of assembly, monomer and homodimer. Part of the essential Sec protein translocation apparatus which comprises SecA, SecYEG and auxiliary proteins SecDF-YajC and YidC.

The protein localises to the cell inner membrane. It is found in the cytoplasm. It catalyses the reaction ATP + H2O + cellular proteinSide 1 = ADP + phosphate + cellular proteinSide 2.. Its function is as follows. Part of the Sec protein translocase complex. Interacts with the SecYEG preprotein conducting channel. Has a central role in coupling the hydrolysis of ATP to the transfer of proteins into and across the cell membrane, serving both as a receptor for the preprotein-SecB complex and as an ATP-driven molecular motor driving the stepwise translocation of polypeptide chains across the membrane. In Pelagibacter ubique (strain HTCC1062), this protein is Protein translocase subunit SecA.